A 338-amino-acid chain; its full sequence is Ketol-acid reductoisomerase (NADP(+)) (338 aa).

Residues 3-183 (IELLYDADAD…GGARAGVIPT (181 aa)) enclose the KARI N-terminal Rossmann domain. NADP(+)-binding positions include 26–29 (YGSQ), R49, S52, S54, and 84–87 (DTSQ). Residue H109 is part of the active site. G135 serves as a coordination point for NADP(+). Residues 184 to 329 (TFEAETVTDL…AKLRDLMSWV (146 aa)) enclose the KARI C-terminal knotted domain. Mg(2+) is bound by residues D192, E196, E228, and E232. Residue S253 coordinates substrate.

This sequence belongs to the ketol-acid reductoisomerase family. Mg(2+) serves as cofactor.

The catalysed reaction is (2R)-2,3-dihydroxy-3-methylbutanoate + NADP(+) = (2S)-2-acetolactate + NADPH + H(+). The enzyme catalyses (2R,3R)-2,3-dihydroxy-3-methylpentanoate + NADP(+) = (S)-2-ethyl-2-hydroxy-3-oxobutanoate + NADPH + H(+). It participates in amino-acid biosynthesis; L-isoleucine biosynthesis; L-isoleucine from 2-oxobutanoate: step 2/4. Its pathway is amino-acid biosynthesis; L-valine biosynthesis; L-valine from pyruvate: step 2/4. In terms of biological role, involved in the biosynthesis of branched-chain amino acids (BCAA). Catalyzes an alkyl-migration followed by a ketol-acid reduction of (S)-2-acetolactate (S2AL) to yield (R)-2,3-dihydroxy-isovalerate. In the isomerase reaction, S2AL is rearranged via a Mg-dependent methyl migration to produce 3-hydroxy-3-methyl-2-ketobutyrate (HMKB). In the reductase reaction, this 2-ketoacid undergoes a metal-dependent reduction by NADPH to yield (R)-2,3-dihydroxy-isovalerate. The chain is Ketol-acid reductoisomerase (NADP(+)) from Corynebacterium glutamicum (strain ATCC 13032 / DSM 20300 / JCM 1318 / BCRC 11384 / CCUG 27702 / LMG 3730 / NBRC 12168 / NCIMB 10025 / NRRL B-2784 / 534).